We begin with the raw amino-acid sequence, 273 residues long: Glutamate 5-kinase (273 aa).

Position 15 (lysine 15) interacts with ATP. Residues serine 55, aspartate 142, and asparagine 158 each contribute to the substrate site. Residues 178 to 179 (SD) and 220 to 226 (TGGMLSK) contribute to the ATP site.

It belongs to the glutamate 5-kinase family.

Its subcellular location is the cytoplasm. The catalysed reaction is L-glutamate + ATP = L-glutamyl 5-phosphate + ADP. It participates in amino-acid biosynthesis; L-proline biosynthesis; L-glutamate 5-semialdehyde from L-glutamate: step 1/2. In terms of biological role, catalyzes the transfer of a phosphate group to glutamate to form L-glutamate 5-phosphate. The sequence is that of Glutamate 5-kinase from Streptococcus pyogenes serotype M1.